The sequence spans 112 residues: Large ribosomal subunit protein bL20c (112 aa).

It belongs to the bacterial ribosomal protein bL20 family.

The protein localises to the plastid. Its subcellular location is the chloroplast. Binds directly to 23S ribosomal RNA and is necessary for the in vitro assembly process of the 50S ribosomal subunit. It is not involved in the protein synthesizing functions of that subunit. The sequence is that of Large ribosomal subunit protein bL20c (rpl20) from Chlamydomonas reinhardtii (Chlamydomonas smithii).